Reading from the N-terminus, the 87-residue chain is U3-theraphotoxin-Hhn1m (87 aa).

The signal sequence occupies residues 1-24 (MVNMKASMFLTFAGLVLLFVVCYA). The propeptide occupies 25–52 (SESEEKEFPKEMLSSIFAVDNDFKQEER). Intrachain disulfides connect C54–C67, C61–C72, and C66–C79.

Belongs to the neurotoxin 10 (Hwtx-1) family. 51 (Hntx-8) subfamily. Hntx-8 sub-subfamily. As to expression, expressed by the venom gland.

The protein resides in the secreted. In terms of biological role, ion channel inhibitor. The protein is U3-theraphotoxin-Hhn1m of Cyriopagopus hainanus (Chinese bird spider).